The chain runs to 370 residues: MRVLALLLAVKAACVLLVSSLTGTGAVNNSGRWWGIVNVASSGNLLTNSKNVQLVLDPSLALLSRRQRKLIRQNPGILHAIAAGLHTAIKECKWQFRNRRWNCPTTHSPNVFGKIVNRGCRETAFVFAITSAGVTHAVARSCSEGAIESCTCDYRRRGPGGPDWHWGGCSDNVEFGRMFGREFVDSSERGRDLRYLTNLHNNEAGRMTVASEMQQECKCHGMSGSCTVRTCWMRLPSFRLVGDYLKDRFDGASRVVYANKGSNRASHRADPRHLEPENPAHKLPSSRDLVYFEKSPNFCSYNGKTGTHGTSGRTCNSSSPALDGCELLCCGRGYKTRMEQVTERCHCTFHWCCHVSCLNCTSTQTVHQCL.

A signal peptide spans Met1–Ser19. N-linked (GlcNAc...) asparagine glycosylation occurs at Asn28. Intrachain disulfides connect Cys92–Cys103, Cys142–Cys150, Cys152–Cys169, Cys217–Cys231, and Cys219–Cys226. Ser223 is lipidated: O-palmitoleoyl serine; by PORCN. Positions Gly261 to Lys282 are disordered. Over residues His267–Ala280 the composition is skewed to basic and acidic residues. 6 disulfides stabilise this stretch: Cys299/Cys330, Cys315/Cys325, Cys329/Cys369, Cys345/Cys360, Cys347/Cys357, and Cys352/Cys353. The N-linked (GlcNAc...) asparagine glycan is linked to Asn316. Asn359 carries N-linked (GlcNAc...) asparagine glycosylation.

It belongs to the Wnt family. Post-translationally, palmitoleoylation is required for efficient binding to frizzled receptors. Palmitoleoylation is necessary for proper trafficking to cell surface. Depalmitoleoylated by NOTUM, leading to inhibit Wnt signaling pathway.

The protein resides in the secreted. The protein localises to the extracellular space. Its subcellular location is the extracellular matrix. Ligand for members of the frizzled family of seven transmembrane receptors. Acts in the canonical Wnt signaling pathway by promoting beta-catenin-dependent transcriptional activation. Involved in neurogenesis. Performs a partially redundant function with wnt10b in the formation of the midbrain-hindbrain boundary (MHB) organizer. In the hindbrain, mediates lateral inhibition of boundary cell specification, probably via up-regulation of proneural and Delta gene expression in non-boundary cells; localized expression of wnt1 in boundary cells is maintained via rfng-mediated modulation of Notch activity. This Danio rerio (Zebrafish) protein is Protein Wnt-1 (wnt1).